The sequence spans 380 residues: Actin-like protein arp10 (380 aa).

It belongs to the actin family. ARP10 subfamily.

The protein localises to the cytoplasm. The protein resides in the cytoskeleton. It is found in the nucleus. In Schizosaccharomyces pombe (strain 972 / ATCC 24843) (Fission yeast), this protein is Actin-like protein arp10 (arp10).